The sequence spans 221 residues: Protein LURP-one-related 17 (221 aa).

The interval methionine 1–serine 20 is disordered.

It belongs to the LOR family.

In terms of biological role, might be related to the phospholipid scramblase and tubby-like superfamily of membrane tethered transcription factors. In Arabidopsis thaliana (Mouse-ear cress), this protein is Protein LURP-one-related 17.